Reading from the N-terminus, the 761-residue chain is Nitrogen fixation protein FixI (761 aa).

Topologically, residues 1 to 120 are cytoplasmic; the sequence is MSCCTMDAES…SAPESDKTRN (120 aa). Positions 36 to 106 constitute an HMA domain; that stretch reads RQLDLSVSDV…EINSAGYRAH (71 aa). Residues Cys47 and Cys50 each contribute to the a metal cation site. A helical membrane pass occupies residues 121 to 142; the sequence is QLLLAIGVSGFAAPNIMLLSVS. Topologically, residues 143-155 are extracellular; sequence VWSGADAATRDMF. A helical transmembrane segment spans residues 156-177; sequence HWISAMIAAPALVYAGRFFFKS. At 178-184 the chain is on the cytoplasmic side; the sequence is AWNALRH. A helical membrane pass occupies residues 185-205; it reads GRTNMDVPISVTVSLSYAVSL. Residues 206-217 are Extracellular-facing; that stretch reads WETVHHGEHAWF. A helical transmembrane segment spans residues 218–238; sequence DASVSLLFFLLIGRTLDHIMR. Residues 239-367 lie on the Cytoplasmic side of the membrane; sequence EKARAAINGL…RARYRRIADR (129 aa). A helical membrane pass occupies residues 368–390; sequence AATLYSPVVHLLALVSFLAWGFL. Over 391–395 the chain is Extracellular; sequence GGDWK. Residues 396 to 415 form a helical membrane-spanning segment; the sequence is QAMLVAVAVLIITCPCALGL. Topologically, residues 416-691 are cytoplasmic; that stretch reads AVPVVQVVAA…AVARRSASLI (276 aa). The 4-aspartylphosphate intermediate role is filled by Asp453. Asp637 and Asp641 together coordinate Mg(2+). The chain crosses the membrane as a helical span at residues 692 to 711; it reads RQNFALAIGYNVLAVPIAIA. The Extracellular portion of the chain corresponds to 712–716; sequence GLATP. Residues 717 to 735 form a helical membrane-spanning segment; sequence LIAAVAMSTSSIIVVTNAL. Residues 736-761 lie on the Cytoplasmic side of the membrane; that stretch reads RLNGFGKRPDMHIRRGIGRSAEVKAA.

This sequence belongs to the cation transport ATPase (P-type) (TC 3.A.3) family. Type IB subfamily.

It is found in the cell membrane. It carries out the reaction ATP + H2O = ADP + phosphate + H(+). Its function is as follows. FixI is a pump of a specific cation involved in symbiotic nitrogen fixation. The four proteins FixG, FixH, FixI, and FixS may participate in a membrane-bound complex coupling the FixI cation pump with a redox process catalyzed by FixG. This chain is Nitrogen fixation protein FixI (fixI), found in Rhizobium leguminosarum bv. viciae.